We begin with the raw amino-acid sequence, 867 residues long: Dynamin-1 (867 aa).

The Dynamin-type G domain occupies 28–294; that stretch reads DLDLPQIAVV…LTNHIRDTLP (267 aa). The interval 38–45 is G1 motif; sequence GGQSAGKS. Residues Ser41, Gly43, Lys44, Ser45, Ser46, Arg59, and Gly60 each contribute to the GDP site. Residues 64-66 are G2 motif; it reads VTR. Tyr80 carries the post-translational modification Phosphotyrosine. Tyr125 bears the 3'-nitrotyrosine; alternate mark. Phosphotyrosine; alternate is present on Tyr125. A G3 motif region spans residues 136 to 139; it reads DLPG. A G4 motif region spans residues 205–208; sequence TKLD. Lys206, Asp208, Asp211, Asn236, Arg237, and Gln239 together coordinate GDP. The G5 motif stretch occupies residues 235 to 238; the sequence is VNRS. Phosphoserine occurs at positions 306 and 347. Tyr354 is modified (phosphotyrosine). Phosphoserine is present on Ser512. One can recognise a PH domain in the interval 515–625; sequence QDEILVIRKG…WKASFLRAGV (111 aa). The GED domain occupies 659 to 750; it reads VETIRNLVDS…IIGDINTTTV (92 aa). A disordered region spans residues 767 to 867; it reads SVPAGRRSPT…HENRAGKARL (101 aa). Phosphoserine is present on residues Ser774 and Ser778. Residue Arg796 is modified to Omega-N-methylarginine. Ser822 carries the phosphoserine modification. The segment covering 825–843 has biased composition (pro residues); it reads PFGPPPQVPSRPNRAPPGV. A phosphoserine mark is found at Gly847, Leu851, and Lys857. Basic and acidic residues predominate over residues 856 to 867; the sequence is GKHENRAGKARL.

This sequence belongs to the TRAFAC class dynamin-like GTPase superfamily. Dynamin/Fzo/YdjA family. In terms of assembly, homodimer; homodimerization is mediated by the dynamin-type G domain which promotes assembly-stimulated GTPase activity. Homo-tetramer formed from two dimers in the absence of lipid. Oligomerizes into a helical polymer that self-assembles around the vesicle membrane, when associated to the menbrane through lipid binding. Interacts (via C-terminal proline-rich domain (PRD)) with SNX9 (via SH3 domain); this interaction allows regulation of DNM1 self-assembly during late stages of endocytic vesicle formation and supports DNM1's early functions in accelerating clathrin-coated pits (CCPs) maturation in non neuronals cell. Interacts (via C-terminal proline-rich domain (PRD)) with MYO1E (via SH3 domain); this interaction regulates receptor-mediated endocytosis. Interacts with SNX33 (via SH3 domain); this interaction decreases DNM1-dependent endocytosis. Interacts with DIAPH1. Interacts with GRB2 (via SH3 domain); this interaction mediates disassembly of DNM1 polymers, therefore modulates self-assembly. Forms a complex with BIN1 (via SH3 domain) and SH3GL2 (via SH3 domain). Forms a complex with SH3GL2 (via SH3 domain) and AMPH (via SH3 domain). Forms a complex with SH3GL2 (via SH3 domain) and SYNJ1. Interacts (via C-terminal proline-rich domain (PRD)) with SYT1; this interaction facilitates vesicle fission during clathrin-mediated endocytosis (CME). Interacts (via C-terminal proline-rich domain (PRD)) with PLCG1 (via SH3 domain); this interaction stimulates the release of GDP from DNM1 and enhances DNM1-dependent endocytosis. Interacts with SNPH; this interaction inhibits the binding of DNM1 to AMPH and DNM1-receptor-mediated endocytosis. Interacts with CAV1. Interacts with SH3GLB1 (via SH3 domain). Interacts with PACSIN1 (via SH3 domain), PACSIN2 (via SH3 domain) and PACSIN3 (via SH3 domain). Interacts with UNC119; this interaction decreases DNM1's GTPase activity and affects DNM1's interaction with AMPH. Interacts with AMPH. Interacts (GTP-bound form) with DNAJC6; this interaction allows clathrin-coated vesicle (CCV) formation at the plasma membrane. Post-translationally, phosphorylation at Ser-774 by GSK3B/GSK3-beta leads to inactivation of receptor-mediated endocytosis in non-neuronal cells. Dephosphorylation at Ser-774, through the EGFR downstream signaling, leads to activation and regulates early stages of clathrin-mediated endocytosis (CME). Phosphorylated on Tyr in response to EGF stimulation in cells expressing truncated EGFR. Phosphorylated by CDK5 leading to synaptic vesicle endocytosis (SVE) activation. As to expression, expressed exclusively in the brain.

It is found in the cell membrane. Its subcellular location is the membrane. The protein localises to the clathrin-coated pit. It localises to the cytoplasmic vesicle. The protein resides in the presynapse. It is found in the secretory vesicle. Its subcellular location is the chromaffin granule. It carries out the reaction GTP + H2O = GDP + phosphate + H(+). Its function is as follows. Catalyzes the hydrolysis of GTP and utilizes this energy to mediate vesicle scission and participates in many forms of endocytosis, such as clathrin-mediated endocytosis or synaptic vesicle endocytosis as well as rapid endocytosis (RE). Associates to the membrane, through lipid binding, and self-assembles into rings and stacks of interconnected rings through oligomerization to form a helical polymer around the vesicle membrane leading to constriction of invaginated coated pits around their necks. Self-assembly of the helical polymer induces membrane tubules narrowing until the polymer reaches a length sufficient to trigger GTP hydrolysis. Depending on the curvature imposed on the tubules, membrane detachment from the helical polymer upon GTP hydrolysis can cause spontaneous hemifission followed by complete fission. May play a role in regulating early stages of clathrin-mediated endocytosis in non-neuronal cells through its activation by dephosphorylation via the signaling downstream of EGFR. Controls vesicle size at a step before fission, during formation of membrane pits, at hippocampal synapses. Controls plastic adaptation of the synaptic vesicle recycling machinery to high levels of activity. Mediates rapid endocytosis (RE), a Ca(2+)-dependent and clathrin- and K(+)-independent process in chromaffin cells. Microtubule-associated force-producing protein involved in producing microtubule bundles and able to bind and hydrolyze GTP. Through its interaction with DNAJC6, acts during the early steps of clathrin-coated vesicle (CCV) formation. The chain is Dynamin-1 from Mus musculus (Mouse).